Reading from the N-terminus, the 228-residue chain is ATP-dependent dethiobiotin synthetase BioD (228 aa).

12 to 17 (EIGKTT) is an ATP binding site. Thr-16 contacts Mg(2+). Lys-37 is a catalytic residue. Substrate is bound at residue Ser-41. ATP is bound by residues Asp-54, 116-119 (EGAG), and 205-207 (PRL). 2 residues coordinate Mg(2+): Asp-54 and Glu-116.

The protein belongs to the dethiobiotin synthetase family. Homodimer. Mg(2+) is required as a cofactor.

The protein localises to the cytoplasm. The enzyme catalyses (7R,8S)-7,8-diammoniononanoate + CO2 + ATP = (4R,5S)-dethiobiotin + ADP + phosphate + 3 H(+). Its pathway is cofactor biosynthesis; biotin biosynthesis; biotin from 7,8-diaminononanoate: step 1/2. Its function is as follows. Catalyzes a mechanistically unusual reaction, the ATP-dependent insertion of CO2 between the N7 and N8 nitrogen atoms of 7,8-diaminopelargonic acid (DAPA, also called 7,8-diammoniononanoate) to form a ureido ring. The polypeptide is ATP-dependent dethiobiotin synthetase BioD (Pseudomonas paraeruginosa (strain DSM 24068 / PA7) (Pseudomonas aeruginosa (strain PA7))).